Here is a 165-residue protein sequence, read N- to C-terminus: Thiol peroxidase (165 aa).

The region spanning 18-164 (RKVGDKAPNF…YEAAIEAAKK (147 aa)) is the Thioredoxin domain. The active-site Cysteine sulfenic acid (-SOH) intermediate is Cys-60. Cys-60 and Cys-94 are oxidised to a cystine.

The protein belongs to the peroxiredoxin family. Tpx subfamily. In terms of assembly, homodimer.

The catalysed reaction is a hydroperoxide + [thioredoxin]-dithiol = an alcohol + [thioredoxin]-disulfide + H2O. Thiol-specific peroxidase that catalyzes the reduction of hydrogen peroxide and organic hydroperoxides to water and alcohols, respectively. Plays a role in cell protection against oxidative stress by detoxifying peroxides. The chain is Thiol peroxidase from Listeria monocytogenes serotype 4b (strain F2365).